Consider the following 99-residue polypeptide: DNA-binding protein Fis (99 aa).

Positions 75–94 (QTRAANMLGINRGTLRKKLK) form a DNA-binding region, H-T-H motif.

It belongs to the transcriptional regulatory Fis family. Homodimer.

Its function is as follows. Activates ribosomal RNA transcription. Plays a direct role in upstream activation of rRNA promoters. This chain is DNA-binding protein Fis, found in Haemophilus influenzae (strain PittEE).